Here is a 290-residue protein sequence, read N- to C-terminus: MPNRGVVLLDGQALAYDIEKDLKNKIQTITAQTHKRPKLAVILVGKDPASITYVNMKIKACQRVGMDFDLKTLQEDITEAKLLSLIKDYNTDQNISGVLVQLPLPRHIDSKMVLEAIDPSKDVDGFHPLNIGKLCTQKESFLPATPMGVMRLLKHYHIEIKGKDVAIIGASNIIGKPLSMLMLNAGASVSVCHILTKDISFYTQNADIVCVGVGKPDLIKASMLKKGAVVVDIGINHLNDGRIVGDVDFNNAQKVAGFITPVPKGVGPMTIVSLLENTLIAFEKQQRKGF.

Residues 169-171 (GAS), Ile194, and Ile235 each bind NADP(+).

It belongs to the tetrahydrofolate dehydrogenase/cyclohydrolase family. As to quaternary structure, homodimer.

It catalyses the reaction (6R)-5,10-methylene-5,6,7,8-tetrahydrofolate + NADP(+) = (6R)-5,10-methenyltetrahydrofolate + NADPH. It carries out the reaction (6R)-5,10-methenyltetrahydrofolate + H2O = (6R)-10-formyltetrahydrofolate + H(+). Its pathway is one-carbon metabolism; tetrahydrofolate interconversion. Catalyzes the oxidation of 5,10-methylenetetrahydrofolate to 5,10-methenyltetrahydrofolate and then the hydrolysis of 5,10-methenyltetrahydrofolate to 10-formyltetrahydrofolate. In Helicobacter pylori (strain HPAG1), this protein is Bifunctional protein FolD.